The sequence spans 139 residues: Myosin light chain kinase, smooth muscle (139 aa).

Residues 48-97 are disordered; sequence APTGENAKAPEMKARRPKSSLPPVLGTESDATVKKKPAPKTPPKAAMPPQ.

This sequence belongs to the protein kinase superfamily. CAMK Ser/Thr protein kinase family. As to quaternary structure, interacts with SVIL. Post-translationally, the C-terminus is deglutamylated by AGTPBP1/CCP1, AGBL1/CCP4 and AGBL4/CCP6, leading to the formation of Myosin light chain kinase, smooth muscle, deglutamylated form. The consequences of C-terminal deglutamylation are unknown.

It carries out the reaction L-seryl-[myosin light chain] + ATP = O-phospho-L-seryl-[myosin light chain] + ADP + H(+). The catalysed reaction is L-threonyl-[myosin light chain] + ATP = O-phospho-L-threonyl-[myosin light chain] + ADP + H(+). In terms of biological role, phosphorylates a specific serine in the N-terminus of a myosin light chain. Also regulates actin-myosin interaction through a non-kinase activity. The chain is Myosin light chain kinase, smooth muscle (MYLK) from Sus scrofa (Pig).